A 728-amino-acid chain; its full sequence is Cellulose synthase-like protein E6 (728 aa).

Transmembrane regions (helical) follow at residues 21-43 (AVYR…YRAT) and 53-73 (AAWL…VITQ). Catalysis depends on residues Asp141 and Asp446. Transmembrane regions (helical) follow at residues 523-543 (LWAA…LGLV), 546-566 (TPLF…VFCV), 646-666 (PEFV…VAGL), 669-689 (IMAG…LIVI), and 707-727 (IPLP…LLPI).

It belongs to the glycosyltransferase 2 family. Plant cellulose synthase-like E subfamily.

The protein resides in the golgi apparatus membrane. Its function is as follows. Thought to be a Golgi-localized beta-glycan synthase that polymerize the backbones of noncellulosic polysaccharides (hemicelluloses) of plant cell wall. The polypeptide is Cellulose synthase-like protein E6 (CSLE6) (Oryza sativa subsp. japonica (Rice)).